A 309-amino-acid polypeptide reads, in one-letter code: GTPase Era (309 aa).

One can recognise an Era-type G domain in the interval 16-186 (HAGFVAIVGK…REQILDALPE (171 aa)). Positions 24 to 31 (GKPNVGKS) are G1. 24–31 (GKPNVGKS) serves as a coordination point for GTP. Residues 50–54 (QTTRR) form a G2 region. Positions 71–74 (DTPG) are G3. GTP contacts are provided by residues 71–75 (DTPGL) and 133–136 (NKVD). Residues 133 to 136 (NKVD) are G4. Residues 164-166 (LSA) are G5. The region spanning 217–294 (LREELPYAVA…FLGLEVIVIP (78 aa)) is the KH type-2 domain.

This sequence belongs to the TRAFAC class TrmE-Era-EngA-EngB-Septin-like GTPase superfamily. Era GTPase family. Monomer.

It localises to the cytoplasm. The protein localises to the cell membrane. Its function is as follows. An essential GTPase that binds both GDP and GTP, with rapid nucleotide exchange. Plays a role in 16S rRNA processing and 30S ribosomal subunit biogenesis and possibly also in cell cycle regulation and energy metabolism. The protein is GTPase Era of Deinococcus geothermalis (strain DSM 11300 / CIP 105573 / AG-3a).